We begin with the raw amino-acid sequence, 162 residues long: UPF0102 protein Bpet0439 (162 aa).

Residues 15-52 (QAQQRQMKRRRAAAHRAARGPAPARAPRASPTQRTGTA) are disordered. The segment covering 20–32 (QMKRRRAAAHRAA) has biased composition (basic residues). A compositionally biased stretch (low complexity) spans 33–48 (RGPAPARAPRASPTQR).

The protein belongs to the UPF0102 family.

In Bordetella petrii (strain ATCC BAA-461 / DSM 12804 / CCUG 43448), this protein is UPF0102 protein Bpet0439.